A 91-amino-acid chain; its full sequence is DNA-directed RNA polymerase subunit omega (91 aa).

Belongs to the RNA polymerase subunit omega family. The RNAP catalytic core consists of 2 alpha, 1 beta, 1 beta' and 1 omega subunit. When a sigma factor is associated with the core the holoenzyme is formed, which can initiate transcription.

The enzyme catalyses RNA(n) + a ribonucleoside 5'-triphosphate = RNA(n+1) + diphosphate. Functionally, promotes RNA polymerase assembly. Latches the N- and C-terminal regions of the beta' subunit thereby facilitating its interaction with the beta and alpha subunits. The sequence is that of DNA-directed RNA polymerase subunit omega from Edwardsiella ictaluri (strain 93-146).